A 262-amino-acid chain; its full sequence is Proenkephalin-A-A (262 aa).

Residues 1–24 (MGLEARHCCMFLLVFASLSVEIRA) form the signal peptide. 3 disulfide bridges follow: C26/C48, C30/C52, and C33/C65. Propeptides lie at residues 110–131 (MDEL…LAKN), 139–177 (EYDS…GEIN), 190–201 (STDLEDETSGIQ), 211–221 (VGRPEWWEDYQ), and 229–253 (TRFT…PDME).

Belongs to the opioid neuropeptide precursor family. The N-terminal domain contains 6 conserved cysteines thought to be involved in disulfide bonding and/or processing.

Its subcellular location is the secreted. In terms of biological role, enkephalin neuropeptides compete with and mimic the effects of opiate drugs. They play a role in a number of physiologic functions, including pain perception and responses to stress. The protein is Proenkephalin-A-A (penk-a) of Xenopus laevis (African clawed frog).